Here is a 134-residue protein sequence, read N- to C-terminus: Complexin-2 (134 aa).

Residues 1 to 114 (MDFVMKQALG…CGDEEEEEEE (114 aa)) form a disordered region. Basic and acidic residues predominate over residues 15-85 (DMGKMLGGEE…EEKEAEEKAA (71 aa)). Residues 28 to 84 (PDAQKKEEERQEALRQQEEERKAKHARMEAEREKVRQQIRDKYGLKKKEEKEAEEKA) adopt a coiled-coil conformation. The tract at residues 41-97 (LRQQEEERKAKHARMEAEREKVRQQIRDKYGLKKKEEKEAEEKAALEQPCEGSLTRP) is interaction with the SNARE complex. Serine 93 carries the post-translational modification Phosphoserine.

It belongs to the complexin/synaphin family. Binds to the SNARE core complex containing SNAP25, VAMP2 and STX1A. Nervous system. Also present in adrenal chromaffin cells (at protein level).

It is found in the cytoplasm. Its subcellular location is the cytosol. The protein localises to the presynapse. It localises to the nucleus. The protein resides in the perikaryon. In terms of biological role, negatively regulates the formation of synaptic vesicle clustering at active zone to the presynaptic membrane in postmitotic neurons. Positively regulates a late step in exocytosis of various cytoplasmic vesicles, such as synaptic vesicles and other secretory vesicles. Also involved in mast cell exocytosis. This chain is Complexin-2 (CPLX2), found in Bos taurus (Bovine).